The primary structure comprises 199 residues: Ribonuclease P protein component 3 (199 aa).

Belongs to the eukaryotic/archaeal RNase P protein component 3 family. As to quaternary structure, consists of a catalytic RNA component and at least 4-5 protein subunits.

The protein localises to the cytoplasm. The enzyme catalyses Endonucleolytic cleavage of RNA, removing 5'-extranucleotides from tRNA precursor.. Its function is as follows. Part of ribonuclease P, a protein complex that generates mature tRNA molecules by cleaving their 5'-ends. The sequence is that of Ribonuclease P protein component 3 from Archaeoglobus fulgidus (strain ATCC 49558 / DSM 4304 / JCM 9628 / NBRC 100126 / VC-16).